Reading from the N-terminus, the 461-residue chain is MDDIDSLILIGVLIALTAFFVASEFAIVRVRRSRIDQLITEGNKRAILARRVITDLDEYLSASQLGITLTSIGLGVLGEPAFERLLHPLFEPLGLPDSVSHAVSFAVAYGLITFLHVVVGELAPKTVAIQKAEQLTLLIAGPLRLFYLLLFPFIWILNGSARLLCGMFGLKPASEHDGSHSEEELRMLLSESLKNGEINPSEYKYVNKIFEFDNRIAKEIMIPRKEMAAVSTEMTMAEMLEVMLKEKYTRWPVTDGDKDSVLGLVNTKHLFSDLLFMTEEERMKMTIHPYVRPVIEVIETIPVHDLLIKMQRERIHMAILSDEYGGTSGLVTTEDILEEIVGEIRDEFDEDEQPLIQKLGDGHYVMDGKVRIDQVNSLLGASIQEDVDTIGGLILKENIDIEAGESIRIGSYTIKVLKMDGRLIKQIDIKEEAGNTTGITAHHKLPLPEPVMLNSATLSEK.

The CNNM transmembrane domain occupies M1–E202. The next 3 membrane-spanning stretches (helical) occupy residues I8–V28, V103–A123, and L137–L157. CBS domains follow at residues M221–E280 and Y290–E347.

Belongs to the UPF0053 family.

The protein localises to the cell membrane. The chain is UPF0053 protein YhdT (yhdT) from Bacillus subtilis (strain 168).